Consider the following 187-residue polypeptide: UPF0301 protein VF_0434 (187 aa).

It belongs to the UPF0301 (AlgH) family.

This Aliivibrio fischeri (strain ATCC 700601 / ES114) (Vibrio fischeri) protein is UPF0301 protein VF_0434.